The following is a 435-amino-acid chain: NADH-quinone oxidoreductase subunit D (435 aa).

This sequence belongs to the complex I 49 kDa subunit family. As to quaternary structure, NDH-1 is composed of 14 different subunits. Subunits NuoB, C, D, E, F, and G constitute the peripheral sector of the complex.

Its subcellular location is the cell inner membrane. The catalysed reaction is a quinone + NADH + 5 H(+)(in) = a quinol + NAD(+) + 4 H(+)(out). Functionally, NDH-1 shuttles electrons from NADH, via FMN and iron-sulfur (Fe-S) centers, to quinones in the respiratory chain. The immediate electron acceptor for the enzyme in this species is believed to be ubiquinone. Couples the redox reaction to proton translocation (for every two electrons transferred, four hydrogen ions are translocated across the cytoplasmic membrane), and thus conserves the redox energy in a proton gradient. In Xanthomonas euvesicatoria pv. vesicatoria (strain 85-10) (Xanthomonas campestris pv. vesicatoria), this protein is NADH-quinone oxidoreductase subunit D.